A 739-amino-acid polypeptide reads, in one-letter code: MTLEMLPEQIQESKIYREWGLTDEEYLKIKDEILGGRLPNFTETGMYAVMWSEHCCYKNSKPVLKKFPTTGPQVLMGPGEGAGVVDIGDDLAVVFKAESHNHPSYVEPYEGAATGSGGIIRDIFSMGARPIAILDSLRFGPIDNGKTRHIVDQVTAGIAGYGNCIGIPTVGGEVAFDESYAGNPLVNVMCVGLIEHKHIQKGQAKGVGNSIFYVGAKTGRDGIHGASFASKEFGSGSETQRSAVQVGDPFMEKLLLEACIEVIQNHGDILVGIQDMGAAGLVSSTSEMASKAGSGLRLNLDNVPQRETEMIPYEMMLSESQERMVLCVKKGHEQEIIDLFKKYDLDAVNIGEVTDDGFYTLYHKGQMVAHVPVDSLAEDAPTYYREAKVPERIQKFTDSEKYLPEITDSAVSEIFKKLLAQPTIASKKSIYETYDSRVMTNTVVAPGSDAAVLRVRGTNKALAMTTDCNARYLYLDPEKGGAIAVAEAARNIVASGGKPLAITDCLNFGNPEKPEQFWELTTAADGISRSCLALDTPVISGNVSLYNETNGSAILPTPMIGMVGLIEDVKNITTQEFKKAGDLIVLVGQTFDDFSGSELQKMLTGEISGKIDFDLETEKVNQDFVLKAITDGLINSAHDLSEGGLAIALAESAFANGLGIDVEVDLSNAQLFSETQGRFVLSISPENQAAFEKLLTESSASSEVIGKVTDNGILKINELSISTDEAVSIYEGALPCLMK.

Residue His-54 is part of the active site. ATP contacts are provided by Tyr-57 and Lys-96. Glu-98 contacts Mg(2+). Substrate-binding positions include 99-102 (SHNH) and Arg-121. His-100 (proton acceptor) is an active-site residue. Asp-122 provides a ligand contact to Mg(2+). Substrate is bound at residue Gln-245. Asp-275 serves as a coordination point for Mg(2+). Position 319 to 321 (319 to 321 (ESQ)) interacts with substrate. Residues Asp-504 and Gly-541 each contribute to the ATP site. A Mg(2+)-binding site is contributed by Asn-542. Ser-544 is a binding site for substrate.

It belongs to the FGAMS family. As to quaternary structure, monomer. Part of the FGAM synthase complex composed of 1 PurL, 1 PurQ and 2 PurS subunits.

It is found in the cytoplasm. The catalysed reaction is N(2)-formyl-N(1)-(5-phospho-beta-D-ribosyl)glycinamide + L-glutamine + ATP + H2O = 2-formamido-N(1)-(5-O-phospho-beta-D-ribosyl)acetamidine + L-glutamate + ADP + phosphate + H(+). Its pathway is purine metabolism; IMP biosynthesis via de novo pathway; 5-amino-1-(5-phospho-D-ribosyl)imidazole from N(2)-formyl-N(1)-(5-phospho-D-ribosyl)glycinamide: step 1/2. Its function is as follows. Part of the phosphoribosylformylglycinamidine synthase complex involved in the purines biosynthetic pathway. Catalyzes the ATP-dependent conversion of formylglycinamide ribonucleotide (FGAR) and glutamine to yield formylglycinamidine ribonucleotide (FGAM) and glutamate. The FGAM synthase complex is composed of three subunits. PurQ produces an ammonia molecule by converting glutamine to glutamate. PurL transfers the ammonia molecule to FGAR to form FGAM in an ATP-dependent manner. PurS interacts with PurQ and PurL and is thought to assist in the transfer of the ammonia molecule from PurQ to PurL. The sequence is that of Phosphoribosylformylglycinamidine synthase subunit PurL from Lactococcus lactis subsp. cremoris (strain SK11).